A 543-amino-acid chain; its full sequence is Probable E3 ubiquitin-protein ligase ARI9 (543 aa).

The interval M1 to S26 is disordered. The interval V124 to V332 is TRIAD supradomain. The Zn(2+) site is built by C128, C131, C145, H147, C150, C153, C173, C178, C217, C222, C240, C242, C247, C250, H255, C260, C287, and C290. Residues C128 to C178 form an RING-type 1 zinc finger. Residues E197–C260 form an IBR-type zinc finger. The RING-type 2; atypical zinc-finger motif lies at C287–C317. Residue C300 is part of the active site. Zn(2+) contacts are provided by C305, C309, C314, C317, H324, and C328.

Belongs to the RBR family. Ariadne subfamily. Zn(2+) is required as a cofactor.

It catalyses the reaction [E2 ubiquitin-conjugating enzyme]-S-ubiquitinyl-L-cysteine + [acceptor protein]-L-lysine = [E2 ubiquitin-conjugating enzyme]-L-cysteine + [acceptor protein]-N(6)-ubiquitinyl-L-lysine.. The protein operates within protein modification; protein ubiquitination. Its function is as follows. Might act as an E3 ubiquitin-protein ligase, or as part of E3 complex, which accepts ubiquitin from specific E2 ubiquitin-conjugating enzymes and then transfers it to substrates. The chain is Probable E3 ubiquitin-protein ligase ARI9 (ARI9) from Arabidopsis thaliana (Mouse-ear cress).